The chain runs to 347 residues: UPF0284 protein M1627_0030 (347 aa).

It belongs to the UPF0284 family.

The polypeptide is UPF0284 protein M1627_0030 (Saccharolobus islandicus (strain M.16.27) (Sulfolobus islandicus)).